A 340-amino-acid polypeptide reads, in one-letter code: S-adenosylmethionine:tRNA ribosyltransferase-isomerase (340 aa).

It belongs to the QueA family. Monomer.

Its subcellular location is the cytoplasm. It carries out the reaction 7-aminomethyl-7-carbaguanosine(34) in tRNA + S-adenosyl-L-methionine = epoxyqueuosine(34) in tRNA + adenine + L-methionine + 2 H(+). Its pathway is tRNA modification; tRNA-queuosine biosynthesis. In terms of biological role, transfers and isomerizes the ribose moiety from AdoMet to the 7-aminomethyl group of 7-deazaguanine (preQ1-tRNA) to give epoxyqueuosine (oQ-tRNA). This Macrococcus caseolyticus (strain JCSC5402) (Macrococcoides caseolyticum) protein is S-adenosylmethionine:tRNA ribosyltransferase-isomerase.